The sequence spans 232 residues: Enolase-phosphatase E1 (232 aa).

It belongs to the HAD-like hydrolase superfamily. MasA/MtnC family. As to quaternary structure, monomer. Requires Mg(2+) as cofactor.

The enzyme catalyses 5-methylsulfanyl-2,3-dioxopentyl phosphate + H2O = 1,2-dihydroxy-5-(methylsulfanyl)pent-1-en-3-one + phosphate. Its pathway is amino-acid biosynthesis; L-methionine biosynthesis via salvage pathway; L-methionine from S-methyl-5-thio-alpha-D-ribose 1-phosphate: step 3/6. It participates in amino-acid biosynthesis; L-methionine biosynthesis via salvage pathway; L-methionine from S-methyl-5-thio-alpha-D-ribose 1-phosphate: step 4/6. Its function is as follows. Bifunctional enzyme that catalyzes the enolization of 2,3-diketo-5-methylthiopentyl-1-phosphate (DK-MTP-1-P) into the intermediate 2-hydroxy-3-keto-5-methylthiopentenyl-1-phosphate (HK-MTPenyl-1-P), which is then dephosphorylated to form the acireductone 1,2-dihydroxy-3-keto-5-methylthiopentene (DHK-MTPene). This chain is Enolase-phosphatase E1, found in Sorangium cellulosum (strain So ce56) (Polyangium cellulosum (strain So ce56)).